Consider the following 311-residue polypeptide: Thioredoxin reductase (311 aa).

33–43 (EGFFSGISGGQ) lines the FAD pocket. An intrachain disulfide couples cysteine 138 to cysteine 141. Residue 283–292 (DVQDKYYRQA) participates in FAD binding.

It belongs to the class-II pyridine nucleotide-disulfide oxidoreductase family. As to quaternary structure, homodimer. FAD is required as a cofactor.

The protein localises to the cytoplasm. The enzyme catalyses [thioredoxin]-dithiol + NADP(+) = [thioredoxin]-disulfide + NADPH + H(+). This is Thioredoxin reductase (trxB) from Chlamydia pneumoniae (Chlamydophila pneumoniae).